The following is a 336-amino-acid chain: Glyceraldehyde-3-phosphate dehydrogenase 1 (336 aa).

Residues 12-13 (RI), Asp-34, and Arg-79 each bind NAD(+). Residues 149 to 151 (SCT), Thr-180, 209 to 210 (TG), and Arg-232 contribute to the D-glyceraldehyde 3-phosphate site. The active-site Nucleophile is Cys-150. Asn-314 provides a ligand contact to NAD(+).

Belongs to the glyceraldehyde-3-phosphate dehydrogenase family. Homotetramer.

It localises to the cytoplasm. The catalysed reaction is D-glyceraldehyde 3-phosphate + phosphate + NAD(+) = (2R)-3-phospho-glyceroyl phosphate + NADH + H(+). The protein operates within carbohydrate degradation; glycolysis; pyruvate from D-glyceraldehyde 3-phosphate: step 1/5. Inhibited by koningic acid through the interaction of cysteine residues with koningic acid even at very low concentrations. This chain is Glyceraldehyde-3-phosphate dehydrogenase 1 (gpd1), found in Trichoderma koningii (Hypocrea koningii).